Here is a 454-residue protein sequence, read N- to C-terminus: Bifunctional protein GlmU (454 aa).

The interval 1-226 (MALNVVILAA…AIEVEGANNR (226 aa)) is pyrophosphorylase. UDP-N-acetyl-alpha-D-glucosamine contacts are provided by residues 8–11 (LAAG), lysine 22, glutamine 73, 78–79 (GT), 100–102 (YGD), glycine 137, glutamate 151, asparagine 166, and asparagine 224. Mg(2+) is bound at residue aspartate 102. Asparagine 224 contacts Mg(2+). The interval 227-247 (VQLAQLERAYQAREAEKLMIA) is linker. Residues 248-454 (GANLRDPSRI…GWQRPVKIKK (207 aa)) form an N-acetyltransferase region. Residues arginine 330 and lysine 348 each coordinate UDP-N-acetyl-alpha-D-glucosamine. The Proton acceptor role is filled by histidine 360. UDP-N-acetyl-alpha-D-glucosamine-binding residues include tyrosine 363 and asparagine 374. Residues alanine 377, 383 to 384 (NY), serine 402, alanine 420, and arginine 437 each bind acetyl-CoA.

This sequence in the N-terminal section; belongs to the N-acetylglucosamine-1-phosphate uridyltransferase family. The protein in the C-terminal section; belongs to the transferase hexapeptide repeat family. Homotrimer. It depends on Mg(2+) as a cofactor.

It localises to the cytoplasm. It carries out the reaction alpha-D-glucosamine 1-phosphate + acetyl-CoA = N-acetyl-alpha-D-glucosamine 1-phosphate + CoA + H(+). The enzyme catalyses N-acetyl-alpha-D-glucosamine 1-phosphate + UTP + H(+) = UDP-N-acetyl-alpha-D-glucosamine + diphosphate. Its pathway is nucleotide-sugar biosynthesis; UDP-N-acetyl-alpha-D-glucosamine biosynthesis; N-acetyl-alpha-D-glucosamine 1-phosphate from alpha-D-glucosamine 6-phosphate (route II): step 2/2. The protein operates within nucleotide-sugar biosynthesis; UDP-N-acetyl-alpha-D-glucosamine biosynthesis; UDP-N-acetyl-alpha-D-glucosamine from N-acetyl-alpha-D-glucosamine 1-phosphate: step 1/1. It participates in bacterial outer membrane biogenesis; LPS lipid A biosynthesis. Catalyzes the last two sequential reactions in the de novo biosynthetic pathway for UDP-N-acetylglucosamine (UDP-GlcNAc). The C-terminal domain catalyzes the transfer of acetyl group from acetyl coenzyme A to glucosamine-1-phosphate (GlcN-1-P) to produce N-acetylglucosamine-1-phosphate (GlcNAc-1-P), which is converted into UDP-GlcNAc by the transfer of uridine 5-monophosphate (from uridine 5-triphosphate), a reaction catalyzed by the N-terminal domain. This Shewanella sp. (strain ANA-3) protein is Bifunctional protein GlmU.